We begin with the raw amino-acid sequence, 510 residues long: Leucine-rich repeat protein lrrA (510 aa).

LRR repeat units lie at residues 14 to 34 (YRKR…PPTI), 35 to 59 (GALQ…IGKL), 60 to 82 (SKVE…IGSL), 84 to 106 (TLKQ…NIGA), 107 to 130 (LKNL…ISNC), 132 to 152 (ALEY…EFGK), 153 to 176 (LYNL…ISGW), 177 to 200 (VKLE…CLLG), 202 to 222 (LSTL…LSSM), 224 to 245 (SLTN…LSNL), 246 to 270 (RQLK…LLSE), 272 to 292 (IELD…IATL), 293 to 315 (INLQ…VGNL), 316 to 340 (INLQ…IGKL), 341 to 363 (VNLK…IASM), 365 to 386 (ALKE…IGEL), 387 to 408 (SGLT…SFGN), 410 to 432 (SELQ…LDGL), 433 to 458 (KSCT…LIGL), and 460 to 478 (ILDV…IVMK).

Its subcellular location is the cytoplasm. Functionally, involved in cytoskeleton remodeling, which is needed for normal chemotactic aggregation and efficient cell sorting during multicellular morphogenesis. The polypeptide is Leucine-rich repeat protein lrrA (lrrA) (Dictyostelium discoideum (Social amoeba)).